Reading from the N-terminus, the 127-residue chain is Fluoride-specific ion channel FluC (127 aa).

4 helical membrane-spanning segments follow: residues 4-24 (SILAIALGAALGALLRWFLGL), 36-56 (GTLLANLVGGYVIGAAIAYFA), 68-88 (LIITGFCGGLTTFSTFSAEVV), and 99-119 (AAGAIATHVSGSLLMTLLGLF). Positions 75 and 78 each coordinate Na(+).

This sequence belongs to the fluoride channel Fluc/FEX (TC 1.A.43) family.

It is found in the cell inner membrane. The enzyme catalyses fluoride(in) = fluoride(out). Na(+) is not transported, but it plays an essential structural role and its presence is essential for fluoride channel function. In terms of biological role, fluoride-specific ion channel. Important for reducing fluoride concentration in the cell, thus reducing its toxicity. The chain is Fluoride-specific ion channel FluC from Pseudomonas aeruginosa (strain UCBPP-PA14).